The chain runs to 502 residues: MSDYTNTVTVEITSDDSLVADVIVVPVASGAVPRLPEDSKFRAYEDILQKLGVTGSKDELTRIPLDGSKHVVLAFIGVGKAFSATELMFAAGSAVRQIGARCIQIDFSVTQKDKLSAIVEGAFLGAYRFDKYRSKKSECPEVIRVSHNINGITDSECRQIIARAKVIAGSVGLAKDLVNTTGDDLYPAQFASFVAKDLEGIDHISVESWDEKRLQEKSCGGILGVGRGSNFPPRLVKISYTPGQYKKHLSLVGKGITFDTGGLSLKPASAMLGMKYDMTGAANVFAVLRIVALLRLSVRVTGWLCLAENMLSGSAIRPGDILRTYSGKTVEVTNTDAEGRLVLADGLALAGDERPDVIIDIATLTGAAKVALGESCSGLMGNNPDLLCSLEVAAKSVGEKFLAVPIDDDALQKALKSDIADIVNVPTSNKVPGMQFGAVFLKEFETTNDSGEAIPWAHLDVAGPANASYDTGFNSCGPTGVAVRSLVEFCRCLSSAPERKLF.

Mn(2+)-binding residues include K254 and D259. Residue K266 is part of the active site. Mn(2+) contacts are provided by D277, D336, and E338. Residue R340 is part of the active site.

This sequence belongs to the peptidase M17 family. The cofactor is Mn(2+).

Its subcellular location is the cytoplasm. It catalyses the reaction Release of an N-terminal amino acid, Xaa-|-Yaa-, in which Xaa is preferably Leu, but may be other amino acids including Pro although not Arg or Lys, and Yaa may be Pro. Amino acid amides and methyl esters are also readily hydrolyzed, but rates on arylamides are exceedingly low.. The enzyme catalyses Release of an N-terminal amino acid, preferentially leucine, but not glutamic or aspartic acids.. Presumably involved in the processing and regular turnover of intracellular proteins. Catalyzes the removal of unsubstituted N-terminal amino acids from various peptides. The polypeptide is Probable cytosol aminopeptidase (Tropheryma whipplei (strain TW08/27) (Whipple's bacillus)).